A 412-amino-acid chain; its full sequence is Class E basic helix-loop-helix protein 40 (412 aa).

Positions 1–21 are disordered; sequence MERIPSAQPPPTCLPKAPGLE. The tract at residues 1-139 is essential for interaction with BMAL1, E-box binding and repressor activity against the CLOCK-BMAL1 heterodimer; it reads MERIPSAQPP…LSGRNVEAGQ (139 aa). The region spanning 52–107 is the bHLH domain; that stretch reads TYKLPHRLIEKKRRDRINECIAQLKDLLPEHLKLTTLGHLEKAVVLELTLKHVKAL. The tract at residues 75–79 is necessary for interaction with RXRA and repressor activity against RXRA; sequence LKDLL. The 34-residue stretch at 142–175 folds into the Orange domain; the sequence is FCSGFQTCAREVLQYLAKHENTRDLKSSQLVTHL. A Glycyl lysine isopeptide (Lys-Gly) (interchain with G-Cter in SUMO1, SUMO2 and SUMO3) cross-link involves residue K159. K167 is covalently cross-linked (Glycyl lysine isopeptide (Lys-Gly) (interchain with G-Cter in SUMO2)). 2 disordered regions span residues 182–256 and 279–298; these read LLQG…ELRV and KQES…SDDE. A Phosphoserine modification is found at S235. K279 is covalently cross-linked (Glycyl lysine isopeptide (Lys-Gly) (interchain with G-Cter in SUMO1); alternate). K279 participates in a covalent cross-link: Glycyl lysine isopeptide (Lys-Gly) (interchain with G-Cter in SUMO1, SUMO2 and SUMO3); alternate. K279 participates in a covalent cross-link: Glycyl lysine isopeptide (Lys-Gly) (interchain with G-Cter in SUMO2); alternate. K288 is covalently cross-linked (Glycyl lysine isopeptide (Lys-Gly) (interchain with G-Cter in SUMO2)). S383 bears the Phosphoserine mark.

Homodimer. Heterodimer with BHLHE41/DEC2. Interacts with TCF3/E47. Interacts with ubiquitin-conjugating enzyme UBE2I/UBC9. Interacts with HDAC1, SUMO1, RXRA and BMAL1. In terms of processing, ubiquitinated; which may lead to proteasomal degradation. Sumoylation inhibits its ubiquitination and promotes its negative regulation of the CLOCK-BMAL1 heterodimer transcriptional activator activity.

The protein localises to the cytoplasm. Its subcellular location is the nucleus. Its function is as follows. Transcriptional repressor involved in the regulation of the circadian rhythm by negatively regulating the activity of the clock genes and clock-controlled genes. Acts as the negative limb of a novel autoregulatory feedback loop (DEC loop) which differs from the one formed by the PER and CRY transcriptional repressors (PER/CRY loop). Both these loops are interlocked as it represses the expression of PER1/2 and in turn is repressed by PER1/2 and CRY1/2. Represses the activity of the circadian transcriptional activator: CLOCK-BMAL1|BMAL2 heterodimer by competing for the binding to E-box elements (5'-CACGTG-3') found within the promoters of its target genes. Negatively regulates its own expression and the expression of DBP and BHLHE41/DEC2. Acts as a corepressor of RXR and the RXR-LXR heterodimers and represses the ligand-induced RXRA and NR1H3/LXRA transactivation activity. May be involved in the regulation of chondrocyte differentiation via the cAMP pathway. Represses the transcription of NR0B2 and attentuates the transactivation of NR0B2 by the CLOCK-BMAL1 complex. Drives the circadian rhythm of blood pressure through transcriptional repression of ATP1B1 in the cardiovascular system. The chain is Class E basic helix-loop-helix protein 40 (BHLHE40) from Bos taurus (Bovine).